The following is a 190-amino-acid chain: Adenine phosphoribosyltransferase (190 aa).

It belongs to the purine/pyrimidine phosphoribosyltransferase family. In terms of assembly, homodimer.

Its subcellular location is the cytoplasm. The enzyme catalyses AMP + diphosphate = 5-phospho-alpha-D-ribose 1-diphosphate + adenine. It functions in the pathway purine metabolism; AMP biosynthesis via salvage pathway; AMP from adenine: step 1/1. In terms of biological role, catalyzes a salvage reaction resulting in the formation of AMP, that is energically less costly than de novo synthesis. The chain is Adenine phosphoribosyltransferase from Cupriavidus taiwanensis (strain DSM 17343 / BCRC 17206 / CCUG 44338 / CIP 107171 / LMG 19424 / R1) (Ralstonia taiwanensis (strain LMG 19424)).